Here is a 417-residue protein sequence, read N- to C-terminus: Serine hydroxymethyltransferase (417 aa).

(6S)-5,6,7,8-tetrahydrofolate is bound by residues leucine 121 and 125–127; that span reads GHL. The residue at position 229 (lysine 229) is an N6-(pyridoxal phosphate)lysine. (6S)-5,6,7,8-tetrahydrofolate is bound at residue 355–357; the sequence is SPF.

The protein belongs to the SHMT family. In terms of assembly, homodimer. It depends on pyridoxal 5'-phosphate as a cofactor.

Its subcellular location is the cytoplasm. The enzyme catalyses (6R)-5,10-methylene-5,6,7,8-tetrahydrofolate + glycine + H2O = (6S)-5,6,7,8-tetrahydrofolate + L-serine. Its pathway is one-carbon metabolism; tetrahydrofolate interconversion. It participates in amino-acid biosynthesis; glycine biosynthesis; glycine from L-serine: step 1/1. In terms of biological role, catalyzes the reversible interconversion of serine and glycine with tetrahydrofolate (THF) serving as the one-carbon carrier. This reaction serves as the major source of one-carbon groups required for the biosynthesis of purines, thymidylate, methionine, and other important biomolecules. Also exhibits THF-independent aldolase activity toward beta-hydroxyamino acids, producing glycine and aldehydes, via a retro-aldol mechanism. The chain is Serine hydroxymethyltransferase from Salmonella arizonae (strain ATCC BAA-731 / CDC346-86 / RSK2980).